Here is a 68-residue protein sequence, read N- to C-terminus: Large ribosomal subunit protein bL35 (68 aa).

This sequence belongs to the bacterial ribosomal protein bL35 family.

The chain is Large ribosomal subunit protein bL35 from Persephonella marina (strain DSM 14350 / EX-H1).